Here is a 64-residue protein sequence, read N- to C-terminus: Large ribosomal subunit protein uL29 (64 aa).

The protein belongs to the universal ribosomal protein uL29 family.

The sequence is that of Large ribosomal subunit protein uL29 from Paraburkholderia phytofirmans (strain DSM 17436 / LMG 22146 / PsJN) (Burkholderia phytofirmans).